A 341-amino-acid polypeptide reads, in one-letter code: S-adenosylmethionine:tRNA ribosyltransferase-isomerase (341 aa).

It belongs to the QueA family. Monomer.

The protein localises to the cytoplasm. It catalyses the reaction 7-aminomethyl-7-carbaguanosine(34) in tRNA + S-adenosyl-L-methionine = epoxyqueuosine(34) in tRNA + adenine + L-methionine + 2 H(+). It participates in tRNA modification; tRNA-queuosine biosynthesis. Transfers and isomerizes the ribose moiety from AdoMet to the 7-aminomethyl group of 7-deazaguanine (preQ1-tRNA) to give epoxyqueuosine (oQ-tRNA). The sequence is that of S-adenosylmethionine:tRNA ribosyltransferase-isomerase from Halothermothrix orenii (strain H 168 / OCM 544 / DSM 9562).